The chain runs to 150 residues: Ribosome maturation factor RimP (150 aa).

This sequence belongs to the RimP family.

It localises to the cytoplasm. Required for maturation of 30S ribosomal subunits. This is Ribosome maturation factor RimP from Klebsiella pneumoniae (strain 342).